Here is a 304-residue protein sequence, read N- to C-terminus: Ribonuclease Z (304 aa).

Residues histidine 63, histidine 65, aspartate 67, histidine 68, histidine 141, aspartate 208, and histidine 266 each contribute to the Zn(2+) site. Catalysis depends on aspartate 67, which acts as the Proton acceptor.

This sequence belongs to the RNase Z family. Homodimer. Zn(2+) is required as a cofactor.

It carries out the reaction Endonucleolytic cleavage of RNA, removing extra 3' nucleotides from tRNA precursor, generating 3' termini of tRNAs. A 3'-hydroxy group is left at the tRNA terminus and a 5'-phosphoryl group is left at the trailer molecule.. In terms of biological role, zinc phosphodiesterase, which displays some tRNA 3'-processing endonuclease activity. Probably involved in tRNA maturation, by removing a 3'-trailer from precursor tRNA. The sequence is that of Ribonuclease Z from Chlamydia muridarum (strain MoPn / Nigg).